Here is a 104-residue protein sequence, read N- to C-terminus: Urease subunit beta (104 aa).

It belongs to the urease beta subunit family. As to quaternary structure, heterotrimer of UreA (gamma), UreB (beta) and UreC (alpha) subunits. Three heterotrimers associate to form the active enzyme.

It localises to the cytoplasm. It carries out the reaction urea + 2 H2O + H(+) = hydrogencarbonate + 2 NH4(+). Its pathway is nitrogen metabolism; urea degradation; CO(2) and NH(3) from urea (urease route): step 1/1. The chain is Urease subunit beta from Methylocella silvestris (strain DSM 15510 / CIP 108128 / LMG 27833 / NCIMB 13906 / BL2).